The sequence spans 290 residues: Agroclavine dehydrogenase (290 aa).

It belongs to the fgaFS/easG family. Monomer.

The enzyme catalyses agroclavine + NADP(+) = didehydroagroclavine + NADPH + H(+). It participates in alkaloid biosynthesis; ergot alkaloid biosynthesis. Functionally, agroclavine dehydrogenase; part of the gene cluster that mediates the biosynthesis of fungal ergot alkaloid. DmaW catalyzes the first step of ergot alkaloid biosynthesis by condensing dimethylallyl diphosphate (DMAP) and tryptophan to form 4-dimethylallyl-L-tryptophan. The second step is catalyzed by the methyltransferase easF that methylates 4-dimethylallyl-L-tryptophan in the presence of S-adenosyl-L-methionine, resulting in the formation of 4-dimethylallyl-L-abrine. The catalase easC and the FAD-dependent oxidoreductase easE then transform 4-dimethylallyl-L-abrine to chanoclavine-I which is further oxidized by easD in the presence of NAD(+), resulting in the formation of chanoclavine-I aldehyde. Agroclavine dehydrogenase easG then mediates the conversion of chanoclavine-I aldehyde to agroclavine via a non-enzymatic adduct reaction: the substrate is an iminium intermediate that is formed spontaneously from chanoclavine-I aldehyde in the presence of glutathione. The presence of easA is not required to complete this reaction. Further conversion of agroclavine to paspalic acid is a two-step process involving oxidation of agroclavine to elymoclavine and of elymoclavine to paspalic acid, the second step being performed by the elymoclavine oxidase cloA. Paspalic acid is then further converted to D-lysergic acid. Ergopeptines are assembled from D-lysergic acid and three different amino acids by the D-lysergyl-peptide-synthetases composed each of a monomudular and a trimodular nonribosomal peptide synthetase subunit. LpsB and lpsC encode the monomodular subunits responsible for D-lysergic acid activation and incorporation into the ergopeptine backbone. LpsA1 and A2 subunits encode the trimodular nonribosomal peptide synthetase assembling the tripeptide portion of ergopeptines. LpsA1 is responsible for formation of the major ergopeptine, ergotamine, and lpsA2 for alpha-ergocryptine, the minor ergopeptine of the total alkaloid mixture elaborated by C.purpurea. D-lysergyl-tripeptides are assembled by the nonribosomal peptide synthetases and released as N-(D-lysergyl-aminoacyl)-lactams. Cyclolization of the D-lysergyl-tripeptides is performed by the Fe(2+)/2-ketoglutarate-dependent dioxygenase easH which introduces a hydroxyl group into N-(D-lysergyl-aminoacyl)-lactam at alpha-C of the aminoacyl residue followed by spontaneous condensation with the terminal lactam carbonyl group. This is Agroclavine dehydrogenase from Claviceps purpurea (Ergot fungus).